A 668-amino-acid chain; its full sequence is DNA ligase (668 aa).

Residues D35–D39, S84–L85, and E115 each bind NAD(+). Catalysis depends on K117, which acts as the N6-AMP-lysine intermediate. Positions 138, 172, 288, and 312 each coordinate NAD(+). C406, C409, C425, and C430 together coordinate Zn(2+). A BRCT domain is found at K589–S668.

The protein belongs to the NAD-dependent DNA ligase family. LigA subfamily. Requires Mg(2+) as cofactor. Mn(2+) serves as cofactor.

The catalysed reaction is NAD(+) + (deoxyribonucleotide)n-3'-hydroxyl + 5'-phospho-(deoxyribonucleotide)m = (deoxyribonucleotide)n+m + AMP + beta-nicotinamide D-nucleotide.. DNA ligase that catalyzes the formation of phosphodiester linkages between 5'-phosphoryl and 3'-hydroxyl groups in double-stranded DNA using NAD as a coenzyme and as the energy source for the reaction. It is essential for DNA replication and repair of damaged DNA. This Petrotoga mobilis (strain DSM 10674 / SJ95) protein is DNA ligase.